Reading from the N-terminus, the 430-residue chain is Enolase (430 aa).

Gln-163 is a binding site for (2R)-2-phosphoglycerate. Glu-205 functions as the Proton donor in the catalytic mechanism. Mg(2+) contacts are provided by Asp-242, Glu-287, and Asp-314. Residues Lys-339, Arg-368, Ser-369, and Lys-390 each contribute to the (2R)-2-phosphoglycerate site. Lys-339 functions as the Proton acceptor in the catalytic mechanism.

The protein belongs to the enolase family. It depends on Mg(2+) as a cofactor.

The protein resides in the cytoplasm. The protein localises to the secreted. It is found in the cell surface. The enzyme catalyses (2R)-2-phosphoglycerate = phosphoenolpyruvate + H2O. The protein operates within carbohydrate degradation; glycolysis; pyruvate from D-glyceraldehyde 3-phosphate: step 4/5. Catalyzes the reversible conversion of 2-phosphoglycerate (2-PG) into phosphoenolpyruvate (PEP). It is essential for the degradation of carbohydrates via glycolysis. In Bacillus licheniformis (strain ATCC 14580 / DSM 13 / JCM 2505 / CCUG 7422 / NBRC 12200 / NCIMB 9375 / NCTC 10341 / NRRL NRS-1264 / Gibson 46), this protein is Enolase.